The following is a 298-amino-acid chain: Bifunctional protein FolD (298 aa).

Residues 165–167 (GRS), serine 190, and isoleucine 231 each bind NADP(+).

Belongs to the tetrahydrofolate dehydrogenase/cyclohydrolase family. As to quaternary structure, homodimer.

It catalyses the reaction (6R)-5,10-methylene-5,6,7,8-tetrahydrofolate + NADP(+) = (6R)-5,10-methenyltetrahydrofolate + NADPH. The enzyme catalyses (6R)-5,10-methenyltetrahydrofolate + H2O = (6R)-10-formyltetrahydrofolate + H(+). Its pathway is one-carbon metabolism; tetrahydrofolate interconversion. Catalyzes the oxidation of 5,10-methylenetetrahydrofolate to 5,10-methenyltetrahydrofolate and then the hydrolysis of 5,10-methenyltetrahydrofolate to 10-formyltetrahydrofolate. This chain is Bifunctional protein FolD, found in Prochlorococcus marinus (strain MIT 9301).